The chain runs to 423 residues: Serine--tRNA ligase (423 aa).

Threonine 231–glutamate 233 provides a ligand contact to L-serine. An ATP-binding site is contributed by arginine 262–glutamate 264. L-serine is bound at residue glutamate 285. Glutamate 349–serine 352 lines the ATP pocket. Serine 384 serves as a coordination point for L-serine.

Belongs to the class-II aminoacyl-tRNA synthetase family. Type-1 seryl-tRNA synthetase subfamily. In terms of assembly, homodimer. The tRNA molecule binds across the dimer.

It is found in the cytoplasm. The catalysed reaction is tRNA(Ser) + L-serine + ATP = L-seryl-tRNA(Ser) + AMP + diphosphate + H(+). It catalyses the reaction tRNA(Sec) + L-serine + ATP = L-seryl-tRNA(Sec) + AMP + diphosphate + H(+). It functions in the pathway aminoacyl-tRNA biosynthesis; selenocysteinyl-tRNA(Sec) biosynthesis; L-seryl-tRNA(Sec) from L-serine and tRNA(Sec): step 1/1. Catalyzes the attachment of serine to tRNA(Ser). Is also able to aminoacylate tRNA(Sec) with serine, to form the misacylated tRNA L-seryl-tRNA(Sec), which will be further converted into selenocysteinyl-tRNA(Sec). This Acinetobacter baylyi (strain ATCC 33305 / BD413 / ADP1) protein is Serine--tRNA ligase.